The primary structure comprises 63 residues: Large ribosomal subunit protein bL35 (63 aa).

Positions 26 to 50 are disordered; the sequence is GSGMRHNLEHKSARKRRALKRDDVL.

The protein belongs to the bacterial ribosomal protein bL35 family.

The polypeptide is Large ribosomal subunit protein bL35 (Bifidobacterium animalis subsp. lactis (strain AD011)).